A 339-amino-acid chain; its full sequence is RNA polymerase II holoenzyme cyclin-like subunit (339 aa).

Residues Pro48–Arg67 form a disordered region. Positions Asn49 to Asn60 are enriched in low complexity. The 102-residue stretch at Arg93–Ile194 folds into the Cyclin N-terminal domain.

Belongs to the cyclin family. Cyclin C subfamily. In terms of assembly, component of the SRB8-11 complex, a regulatory module of the Mediator complex.

It localises to the nucleus. Component of the SRB8-11 complex. The SRB8-11 complex is a regulatory module of the Mediator complex which is itself involved in regulation of basal and activated RNA polymerase II-dependent transcription. The SRB8-11 complex may be involved in the transcriptional repression of a subset of genes regulated by Mediator. It may inhibit the association of the Mediator complex with RNA polymerase II to form the holoenzyme complex. The SRB8-11 complex phosphorylates the C-terminal domain (CTD) of the largest subunit of RNA polymerase II. This Candida glabrata (strain ATCC 2001 / BCRC 20586 / JCM 3761 / NBRC 0622 / NRRL Y-65 / CBS 138) (Yeast) protein is RNA polymerase II holoenzyme cyclin-like subunit (SSN8).